The chain runs to 123 residues: Small ribosomal subunit protein uS12 (123 aa).

D89 is modified (3-methylthioaspartic acid).

Belongs to the universal ribosomal protein uS12 family. Part of the 30S ribosomal subunit. Contacts proteins S8 and S17. May interact with IF1 in the 30S initiation complex.

Functionally, with S4 and S5 plays an important role in translational accuracy. In terms of biological role, interacts with and stabilizes bases of the 16S rRNA that are involved in tRNA selection in the A site and with the mRNA backbone. Located at the interface of the 30S and 50S subunits, it traverses the body of the 30S subunit contacting proteins on the other side and probably holding the rRNA structure together. The combined cluster of proteins S8, S12 and S17 appears to hold together the shoulder and platform of the 30S subunit. The sequence is that of Small ribosomal subunit protein uS12 from Brucella abortus (strain S19).